Consider the following 502-residue polypeptide: T-complex protein 11-like X-linked protein 2 (502 aa).

The tract at residues 1-36 is disordered; it reads MPKTEETVLQNDPSVAENGAPEPKTPGQSQKSKSFC.

The protein belongs to the TCP11 family.

This Homo sapiens (Human) protein is T-complex protein 11-like X-linked protein 2.